The chain runs to 484 residues: Nuclear rim protein 1 (484 aa).

A Phosphoserine modification is found at serine 3. 2 consecutive transmembrane segments (helical) span residues 145–165 and 237–257; these read FTIFILLSLNLYVSCKFMFGY and IPTNFIINLFVSFSPTAIVFL. Positions 416–457 are disordered; that stretch reads SSNENLEKGGAFLPNQDQNRPSKSLSPLRKTPLSARQKRFEG. Serine 417 is modified (phosphoserine). Positions 430 to 440 are enriched in polar residues; the sequence is NQDQNRPSKSL. Serine 474 carries the phosphoserine modification.

This sequence belongs to the NUR1 family. As to quaternary structure, interacts with CSM1.

It localises to the nucleus membrane. Member of a perinuclear network that controls recombination at multiple loci to maintain genome stability. Required for rDNA repeat stability. The polypeptide is Nuclear rim protein 1 (NUR1) (Saccharomyces cerevisiae (strain JAY291) (Baker's yeast)).